The primary structure comprises 309 residues: MSFPDITPELKAAMPELRGRLLSNEPLAPLTWFRVGGPAQVLFTPADEDDLGYFLPRLPAEIPVMCLGLGSNLIVRDGGLPGVAIRLSPRGFGEHRVEGEMVHAGAAALDKRVAETAAAAQLGGLEFYYGIPGSIGGALRMNAGANGRETKDVLIDATAYDRSGTRKLFDNAAMQFSYRHSGADPALIFTSARLRGTPATPDHIRAKMNEVQAHRELAQPIREKTGGSTFKNPPGQSAWRLIDAAGCRGLKIGGAQVSEMHCNFLINTGEATAADIETLGETVRARVKAQSGVELQWEIKRIGVAPGKG.

In terms of domain architecture, FAD-binding PCMH-type spans 34 to 199 (RVGGPAQVLF…TSARLRGTPA (166 aa)). Arg-179 is an active-site residue. Ser-228 serves as the catalytic Proton donor. The active site involves Glu-298.

This sequence belongs to the MurB family. Requires FAD as cofactor.

It localises to the cytoplasm. It catalyses the reaction UDP-N-acetyl-alpha-D-muramate + NADP(+) = UDP-N-acetyl-3-O-(1-carboxyvinyl)-alpha-D-glucosamine + NADPH + H(+). The protein operates within cell wall biogenesis; peptidoglycan biosynthesis. Its function is as follows. Cell wall formation. This chain is UDP-N-acetylenolpyruvoylglucosamine reductase, found in Rhodopseudomonas palustris (strain ATCC BAA-98 / CGA009).